The primary structure comprises 244 residues: Phosphoadenosine 5'-phosphosulfate reductase (244 aa).

The Nucleophile; cysteine thiosulfonate intermediate role is filled by Cys-239.

The protein belongs to the PAPS reductase family. CysH subfamily.

The protein resides in the cytoplasm. It carries out the reaction [thioredoxin]-disulfide + sulfite + adenosine 3',5'-bisphosphate + 2 H(+) = [thioredoxin]-dithiol + 3'-phosphoadenylyl sulfate. The protein operates within sulfur metabolism; hydrogen sulfide biosynthesis; sulfite from sulfate: step 3/3. Catalyzes the formation of sulfite from phosphoadenosine 5'-phosphosulfate (PAPS) using thioredoxin as an electron donor. The chain is Phosphoadenosine 5'-phosphosulfate reductase from Escherichia coli O157:H7.